A 365-amino-acid chain; its full sequence is Probable L-tyrosine/L-aspartate decarboxylase (365 aa).

Lysine 224 is modified (N6-(pyridoxal phosphate)lysine).

Belongs to the group II decarboxylase family. MfnA subfamily. Pyridoxal 5'-phosphate serves as cofactor.

The enzyme catalyses L-tyrosine + H(+) = tyramine + CO2. It catalyses the reaction L-aspartate + H(+) = beta-alanine + CO2. It functions in the pathway cofactor biosynthesis; methanofuran biosynthesis. Its pathway is cofactor biosynthesis; coenzyme A biosynthesis. Its function is as follows. Catalyzes the decarboxylation of L-tyrosine to produce tyramine for methanofuran biosynthesis. Can also catalyze the decarboxylation of L-aspartate to produce beta-alanine for coenzyme A (CoA) biosynthesis. The protein is Probable L-tyrosine/L-aspartate decarboxylase of Methanoculleus marisnigri (strain ATCC 35101 / DSM 1498 / JR1).